The following is a 154-amino-acid chain: Ascorbate-specific PTS system EIIA component (154 aa).

Positions 6–150 (SLAENKSIRL…QEVLDLIDRT (145 aa)) constitute a PTS EIIA type-2 domain. The active-site Tele-phosphohistidine intermediate is the His68. Residue His68 is modified to Phosphohistidine.

The protein resides in the cytoplasm. Its function is as follows. The phosphoenolpyruvate-dependent sugar phosphotransferase system (sugar PTS), a major carbohydrate active transport system, catalyzes the phosphorylation of incoming sugar substrates concomitantly with their translocation across the cell membrane. The enzyme II UlaABC PTS system is involved in ascorbate transport. This is Ascorbate-specific PTS system EIIA component (ulaC) from Shigella flexneri.